A 348-amino-acid chain; its full sequence is Dihydroorotase (348 aa).

2 residues coordinate Zn(2+): His-14 and His-16. Substrate-binding positions include 16–18 (HLR) and Asn-42. Zn(2+)-binding residues include Lys-100, His-137, and His-175. At Lys-100 the chain carries N6-carboxylysine. His-137 contacts substrate. Leu-220 provides a ligand contact to substrate. Asp-248 contributes to the Zn(2+) binding site. Residue Asp-248 is part of the active site. Substrate contacts are provided by His-252 and Ala-264.

It belongs to the metallo-dependent hydrolases superfamily. DHOase family. Class II DHOase subfamily. In terms of assembly, homodimer. The cofactor is Zn(2+).

The enzyme catalyses (S)-dihydroorotate + H2O = N-carbamoyl-L-aspartate + H(+). The protein operates within pyrimidine metabolism; UMP biosynthesis via de novo pathway; (S)-dihydroorotate from bicarbonate: step 3/3. In terms of biological role, catalyzes the reversible cyclization of carbamoyl aspartate to dihydroorotate. The polypeptide is Dihydroorotase (Pseudomonas fluorescens (strain SBW25)).